We begin with the raw amino-acid sequence, 372 residues long: NAD(P)H-quinone oxidoreductase subunit 1 (372 aa).

The next 8 helical transmembrane spans lie at 29-49, 97-117, 128-148, 176-196, 204-224, 254-274, 308-328, and 351-371; these read WLPF…LVTV, LLFT…YLVV, LGVA…GLLM, LALA…IDIV, ILGW…IAVL, FALY…LVAV, TLGI…AVLL, and VALV…FAFG.

Belongs to the complex I subunit 1 family. In terms of assembly, NDH-1 is composed of at least 11 different subunits.

The protein localises to the cellular thylakoid membrane. It catalyses the reaction a plastoquinone + NADH + (n+1) H(+)(in) = a plastoquinol + NAD(+) + n H(+)(out). The catalysed reaction is a plastoquinone + NADPH + (n+1) H(+)(in) = a plastoquinol + NADP(+) + n H(+)(out). NDH-1 shuttles electrons from an unknown electron donor, via FMN and iron-sulfur (Fe-S) centers, to quinones in the respiratory and/or the photosynthetic chain. The immediate electron acceptor for the enzyme in this species is believed to be plastoquinone. Couples the redox reaction to proton translocation, and thus conserves the redox energy in a proton gradient. This chain is NAD(P)H-quinone oxidoreductase subunit 1, found in Trichodesmium erythraeum (strain IMS101).